A 288-amino-acid polypeptide reads, in one-letter code: Ankyrin repeat and SOCS box protein 8 (288 aa).

Ser-17 is modified (phosphoserine). ANK repeat units follow at residues 52–81 (GTLK…EVNA), 85–113 (YNRT…NPNA), 117–146 (NRDT…SVNA), and 150–179 (NNDT…EVRV). An SOCS box domain is found at 235-288 (QLCEKLTVLCSAPGTLKTLARYTVRRSLGLQYLPDAVKGLPLPASLKEYLLLLE).

Belongs to the ankyrin SOCS box (ASB) family. As to quaternary structure, interacts with TBK1; this interaction promotes TBK1 proteasomal degradation. In terms of processing, phosphorylated by TBK1.

The protein resides in the cytoplasm. The protein operates within protein modification; protein ubiquitination. Its function is as follows. May be a substrate-recognition component of a SCF-like ECS (Elongin-Cullin-SOCS-box protein) E3 ubiquitin-protein ligase complex which mediates the ubiquitination and subsequent proteasomal degradation of target proteins. Inhibits IFN-beta production through the IRF3 signaling pathway by targeting TBK1 via 'Lys-48'-linked ubiquitination, leading to its proteasomal degradation. This chain is Ankyrin repeat and SOCS box protein 8 (ASB8), found in Pongo abelii (Sumatran orangutan).